The following is a 102-amino-acid chain: Monothiol glutaredoxin-S6 (102 aa).

The Glutaredoxin domain occupies M1 to W101. C21 serves as a coordination point for [2Fe-2S] cluster.

The protein belongs to the glutaredoxin family. CC-type subfamily.

It localises to the cytoplasm. May only reduce GSH-thiol disulfides, but not protein disulfides. This Arabidopsis thaliana (Mouse-ear cress) protein is Monothiol glutaredoxin-S6 (GRXS6).